We begin with the raw amino-acid sequence, 496 residues long: Glutamyl-tRNA(Gln) amidotransferase subunit A (496 aa).

Active-site charge relay system residues include Lys79 and Ser159. Ser183 (acyl-ester intermediate) is an active-site residue.

This sequence belongs to the amidase family. GatA subfamily. As to quaternary structure, heterotrimer of A, B and C subunits.

The enzyme catalyses L-glutamyl-tRNA(Gln) + L-glutamine + ATP + H2O = L-glutaminyl-tRNA(Gln) + L-glutamate + ADP + phosphate + H(+). Functionally, allows the formation of correctly charged Gln-tRNA(Gln) through the transamidation of misacylated Glu-tRNA(Gln) in organisms which lack glutaminyl-tRNA synthetase. The reaction takes place in the presence of glutamine and ATP through an activated gamma-phospho-Glu-tRNA(Gln). The polypeptide is Glutamyl-tRNA(Gln) amidotransferase subunit A (Bartonella quintana (strain Toulouse) (Rochalimaea quintana)).